Reading from the N-terminus, the 543-residue chain is MAKILVFDEAARRALERGVNAVANAVKVTLGPRGRNVVLEKKFGSPTITKDGVTVAKEVELEDHLENIGAQLLKEVASKTNDVAGDGTTTATVLAQAIVREGLKNVAAGANPLALKRGIEKAVEAAVEKIKALAIPVEDRKAIEEVATISANDPEVGKLIADAMEKVGKEGIITVEESKSLETELKFVEGYQFDKGYISPYFVTNPETMEAVLEDAFILIVEKKVSNVRELLPILEQVAQTGKPLLIIAEDVEGEALATLVVNKLRGTLSVAAVKAPGFGDRRKEMLKDIAAVTGGTVISEELGFKLENATLSMLGRAERVRITKDETTIVGGKGKKEDIEARINGIKKELETTDSEYAREKLQERLAKLAGGVAVIRVGAATETELKEKKHRFEDALNATRAAVEEGIVPGGGVTLLRAISAVEELIKKLEGDEATGAKIVRRALEEPARQIAENAGYEGSVIVQQILAETKNPRYGFNAATGEFVDMVEAGIVDPAKVTRSALQNAASIGALILTTEAVVAEKPEKKESTPASAGAGDMDF.

ATP is bound by residues 29–32 (TLGP), lysine 50, 86–90 (DGTTT), glycine 413, 480–482 (NAA), and aspartate 496. The tract at residues 524–543 (EKPEKKESTPASAGAGDMDF) is disordered.

The protein belongs to the chaperonin (HSP60) family. As to quaternary structure, forms a cylinder of 14 subunits composed of two heptameric rings stacked back-to-back. Interacts with the co-chaperonin GroES.

The protein resides in the cytoplasm. The enzyme catalyses ATP + H2O + a folded polypeptide = ADP + phosphate + an unfolded polypeptide.. Functionally, together with its co-chaperonin GroES, plays an essential role in assisting protein folding. The GroEL-GroES system forms a nano-cage that allows encapsulation of the non-native substrate proteins and provides a physical environment optimized to promote and accelerate protein folding. The protein is Chaperonin GroEL of Thermus thermophilus (strain ATCC BAA-163 / DSM 7039 / HB27).